Consider the following 100-residue polypeptide: Large ribosomal subunit protein uL23 (100 aa).

Belongs to the universal ribosomal protein uL23 family. In terms of assembly, part of the 50S ribosomal subunit. Contacts protein L29, and trigger factor when it is bound to the ribosome.

Its function is as follows. One of the early assembly proteins it binds 23S rRNA. One of the proteins that surrounds the polypeptide exit tunnel on the outside of the ribosome. Forms the main docking site for trigger factor binding to the ribosome. The polypeptide is Large ribosomal subunit protein uL23 (Prochlorococcus marinus (strain MIT 9313)).